We begin with the raw amino-acid sequence, 488 residues long: Cysteine--tRNA ligase (488 aa).

Position 40 (cysteine 40) interacts with Zn(2+). Residues 42 to 52 carry the 'HIGH' region motif; sequence MTVYDYCHIGH. Residues cysteine 221, histidine 246, and glutamate 250 each coordinate Zn(2+). Positions 278-282 match the 'KMSKS' region motif; that stretch reads KMSKS. Residue lysine 281 coordinates ATP.

This sequence belongs to the class-I aminoacyl-tRNA synthetase family. Monomer. It depends on Zn(2+) as a cofactor.

The protein resides in the cytoplasm. It catalyses the reaction tRNA(Cys) + L-cysteine + ATP = L-cysteinyl-tRNA(Cys) + AMP + diphosphate. This chain is Cysteine--tRNA ligase, found in Psychrobacter cryohalolentis (strain ATCC BAA-1226 / DSM 17306 / VKM B-2378 / K5).